Here is a 152-residue protein sequence, read N- to C-terminus: SKP1-like protein 12 (152 aa).

The interval 94–152 (ILAANYLNIKSLFDLTCQTVADMIKGKTPEEIRSTFNIENDFTPEEEEAVRKENQWAFE) is interaction with the F-box domain of F-box proteins.

The protein belongs to the SKP1 family. Part of a SCF (SKP1-cullin-F-box) protein ligase complex. Interacts with ADO3/FKF1, COI1/FBL2, EBF1/FBL6, PP2B10, At3g61590 and At5g49610. As to expression, expressed in young seedlings, roots, leaves, floral stems, inflorescences, and siliques, with a slightly higher level in inflorescence than in other tissues.

The protein resides in the nucleus. The protein operates within protein modification; protein ubiquitination. Its function is as follows. Involved in ubiquitination and subsequent proteasomal degradation of target proteins. Together with CUL1, RBX1 and a F-box protein, it forms a SCF E3 ubiquitin ligase complex. The functional specificity of this complex depends on the type of F-box protein. In the SCF complex, it serves as an adapter that links the F-box protein to CUL1. Plays a role during early flowers reproductive development. This is SKP1-like protein 12 (ASK12) from Arabidopsis thaliana (Mouse-ear cress).